Here is a 354-residue protein sequence, read N- to C-terminus: Uroporphyrinogen decarboxylase (354 aa).

Residues 27–31 (RRAGR), phenylalanine 46, aspartate 77, tyrosine 154, threonine 209, and histidine 327 each bind substrate.

Belongs to the uroporphyrinogen decarboxylase family. Homodimer.

Its subcellular location is the cytoplasm. It catalyses the reaction uroporphyrinogen III + 4 H(+) = coproporphyrinogen III + 4 CO2. Its pathway is porphyrin-containing compound metabolism; protoporphyrin-IX biosynthesis; coproporphyrinogen-III from 5-aminolevulinate: step 4/4. Catalyzes the decarboxylation of four acetate groups of uroporphyrinogen-III to yield coproporphyrinogen-III. The chain is Uroporphyrinogen decarboxylase from Salmonella typhimurium (strain LT2 / SGSC1412 / ATCC 700720).